A 347-amino-acid chain; its full sequence is tRNA N6-adenosine threonylcarbamoyltransferase (347 aa).

Residues His-111 and His-115 each coordinate Fe cation. Substrate contacts are provided by residues 134–138 (LISGG), Asp-167, Gly-180, and Asn-277. Asp-305 contacts Fe cation.

It belongs to the KAE1 / TsaD family. Requires Fe(2+) as cofactor.

Its subcellular location is the cytoplasm. It catalyses the reaction L-threonylcarbamoyladenylate + adenosine(37) in tRNA = N(6)-L-threonylcarbamoyladenosine(37) in tRNA + AMP + H(+). Required for the formation of a threonylcarbamoyl group on adenosine at position 37 (t(6)A37) in tRNAs that read codons beginning with adenine. Is involved in the transfer of the threonylcarbamoyl moiety of threonylcarbamoyl-AMP (TC-AMP) to the N6 group of A37, together with TsaE and TsaB. TsaD likely plays a direct catalytic role in this reaction. The polypeptide is tRNA N6-adenosine threonylcarbamoyltransferase (Actinobacillus pleuropneumoniae serotype 5b (strain L20)).